Consider the following 332-residue polypeptide: Ferredoxin--NADP reductase (332 aa).

FAD is bound by residues threonine 20, glutamate 39, glutamine 47, tyrosine 52, valine 92, phenylalanine 126, aspartate 288, and threonine 329.

This sequence belongs to the ferredoxin--NADP reductase type 2 family. Homodimer. The cofactor is FAD.

The catalysed reaction is 2 reduced [2Fe-2S]-[ferredoxin] + NADP(+) + H(+) = 2 oxidized [2Fe-2S]-[ferredoxin] + NADPH. This Geobacillus kaustophilus (strain HTA426) protein is Ferredoxin--NADP reductase.